The chain runs to 630 residues: Phosphomethylpyrimidine synthase (630 aa).

Disordered stretches follow at residues 1 to 22 (MADIDSRLDTTQATPIGVTTGP) and 97 to 120 (AQREVRPEDNGQLGPDRSGGVPAF). Substrate is bound by residues Asn224, Met253, Tyr282, His318, 338-340 (SRG), 379-382 (DGLR), and Glu418. A Zn(2+)-binding site is contributed by His422. Tyr445 lines the substrate pocket. His486 is a Zn(2+) binding site. [4Fe-4S] cluster-binding residues include Cys566, Cys569, and Cys574.

This sequence belongs to the ThiC family. In terms of assembly, homodimer. The cofactor is [4Fe-4S] cluster.

It carries out the reaction 5-amino-1-(5-phospho-beta-D-ribosyl)imidazole + S-adenosyl-L-methionine = 4-amino-2-methyl-5-(phosphooxymethyl)pyrimidine + CO + 5'-deoxyadenosine + formate + L-methionine + 3 H(+). The protein operates within cofactor biosynthesis; thiamine diphosphate biosynthesis. In terms of biological role, catalyzes the synthesis of the hydroxymethylpyrimidine phosphate (HMP-P) moiety of thiamine from aminoimidazole ribotide (AIR) in a radical S-adenosyl-L-methionine (SAM)-dependent reaction. This chain is Phosphomethylpyrimidine synthase, found in Sphingopyxis alaskensis (strain DSM 13593 / LMG 18877 / RB2256) (Sphingomonas alaskensis).